The primary structure comprises 892 residues: Dystroglycan 1 (892 aa).

The signal sequence occupies residues 1 to 27 (MRMSAGLSLLLPLWGRTFLLLLSVAMA). Residues 28–750 (QSHWPSEAGR…SSEDDVYLHT (723 aa)) lie on the Extracellular side of the membrane. Positions 30–405 (HWPSEAGRDW…GQIRPTMTIP (376 aa)) are required for laminin recognition. Residues 46–68 (SMHSVLSDLHEAVPTVVGIPDGI) are O-glycosylated at one site. Asparagine 138 carries N-linked (GlcNAc...) asparagine glycosylation. An intrachain disulfide couples cysteine 179 to cysteine 261. Positions 313–482 (ATPTPVTAIG…PPTRIRTTTS (170 aa)) are mucin-like domain. O-linked (Man6P...) threonine glycosylation is found at threonine 314, threonine 316, and threonine 376. Residues 378 to 497 (TLGPIQPTRV…GEPNQRPELK (120 aa)) are disordered. A compositionally biased stretch (low complexity) spans 410-444 (PTAVATPPTTTTKKPRVSTPKPATPSTDSSTTTTR). Residues 460–482 (TTKAPITRLETASPPTRIRTTTS) are O-glycosylated at seven sites with GalNAc. Residues 600–709 (RAPARFKAKF…SSIAVTGSGS (110 aa)) form the Peptidase S72 domain. Asparagine 638, asparagine 646, and asparagine 658 each carry an N-linked (GlcNAc...) asparagine glycan. A disulfide bond links cysteine 666 and cysteine 710. Residues 721 to 742 (PRRVPSEVPSTDVPDRDPEKSS) form a disordered region. Residues 733-742 (VPDRDPEKSS) are compositionally biased toward basic and acidic residues. A helical membrane pass occupies residues 751-771 (VIPAVVVAAILLIAGIIAMIC). Residues 772 to 892 (YRKKRKGKLT…YRSPPPYVPP (121 aa)) are Cytoplasmic-facing. The Nuclear localization signal signature appears at 773 to 779 (RKKRKGK). Threonine 787 is modified (phosphothreonine). The segment at 816 to 892 (LQEEKAPLPP…YRSPPPYVPP (77 aa)) is required for interaction with CAV3. Positions 820 to 892 (KAPLPPPEYP…YRSPPPYVPP (73 aa)) are disordered. Positions 829 to 843 (PNQSVPETTPLNQDT) are enriched in polar residues. Residues 856–867 (NAPPYQPPPPFT) show a composition bias toward pro residues. Residues 877 to 892 (PKNMTPYRSPPPYVPP) form a required for binding DMD and UTRN region. The PPXY motif motif lies at 886–889 (PPPY). Position 889 is a phosphotyrosine; by SRC (tyrosine 889).

In terms of assembly, monomer. Heterodimer of alpha- and beta-dystroglycan subunits which are the central components of the dystrophin-glycoprotein complex. This complex then can form a dystrophin-associated glycoprotein complex (DGC) which is composed of three subcomplexes: a cytoplasmic complex comprised of DMD (or UTRN), DTNA and a number of syntrophins, such as SNTB1, SNTB2, SNTG1 and SNTG2, the transmembrane dystroglycan complex, and the sarcoglycan-sarcospan complex. Interacts (via the N-terminal of alphaDAG1) with LARGE1; the interaction enhances laminin binding. Interacts with SGCD. Interacts with AGR2 and AGR3. Interacts (betaDAG1) with DMD; the interaction is inhibited by phosphorylation on the PPXY motif. Interacts (betaDAG1, via its PPXY motif) with UTRN (via its WWW and ZZ domains); the interaction is inhibited by phosphorylation on the PPXY motif. Interacts (betaDAG1, via its phosphorylated PPXY motif) with the SH2 domain-containing proteins, FYN, CSK, NCK and SHC. Interacts (betaDAG1) with CAV3 (via a central WW-like domain); the interaction disrupts the binding of DMD. BetaDAG1 directly interacts with ANK3, but not with ANK2; this interaction does not interfere with DMD-binding and is required for retention at costameres. Identified in a dystroglycan complex that contains at least PRX, DRP2, UTRN, DMD and DAG1. Interacts with POMGNT1. BetaDAG1 interacts with CD93. In terms of processing, O-glycosylated. POMGNT1 catalyzes the initial addition of N-acetylglucosamine, giving rise to the GlcNAc(beta1-2)Man(alpha1-)O-Ser/Thr moiety and thus providing the necessary basis for the addition of further carbohydrate moieties. Heavily O-glycosylated comprising of up to two thirds of its mass and the carbohydrate composition differs depending on tissue type. Mucin-type O-glycosylation is important for ligand binding activity. O-mannosylation is found in high abundance in both brain and muscle where the most abundant glycan is Sia-alpha-2-3-Gal-beta-1-4-Glc-NAc-beta-1-2-Man. In muscle, glycosylation on Thr-314, Thr-316 and Thr-376 by a phosphorylated O-mannosyl glycan with the structure 2-(N-acetylamido)-2-deoxygalactosyl-beta-1,3-2-(N-acetylamido)-2-deoxyglucosyl-beta-1,4-6-phosphomannose is mediated by like-acetylglucosaminyltransferase (LARGE1) protein amd is required for laminin binding. O-glycosylated in the N-terminal region with a core 1 or possibly core 8 glycan. The brain form displays a unique glycosylation pattern which is absent in other tissues; this form shows enhanced binding to laminin LAMA5 compared to the skeletal muscle form. Post-translationally, N-glycosylated. Autolytic cleavage produces the alpha and beta subunits. In cutaneous cells, as well as in certain pathological conditions, shedding of beta-dystroglycan can occur releasing a peptide of about 30 kDa. In terms of processing, SRC-mediated phosphorylation of the PPXY motif of the beta subunit recruits SH2 domain-containing proteins, but inhibits binding to WWW domain-containing proteins, DMD and UTRN. This phosphorylation also inhibits nuclear entry.

Its subcellular location is the secreted. It is found in the extracellular space. The protein resides in the cell membrane. It localises to the cytoplasm. The protein localises to the cytoskeleton. Its subcellular location is the nucleus. It is found in the nucleoplasm. The protein resides in the sarcolemma. It localises to the postsynaptic cell membrane. The dystroglycan complex is involved in a number of processes including laminin and basement membrane assembly, sarcolemmal stability, cell survival, peripheral nerve myelination, nodal structure, cell migration, and epithelial polarization. Functionally, extracellular peripheral glycoprotein that acts as a receptor for extracellular matrix proteins containing laminin-G domains. Receptor for laminin-2 (LAMA2) and agrin in peripheral nerve Schwann cells. Also acts as a receptor for laminin LAMA5. In terms of biological role, transmembrane protein that plays important roles in connecting the extracellular matrix to the cytoskeleton. Acts as a cell adhesion receptor in both muscle and non-muscle tissues. Receptor for both DMD and UTRN and, through these interactions, scaffolds axin to the cytoskeleton. Also functions in cell adhesion-mediated signaling and implicated in cell polarity. The protein is Dystroglycan 1 of Canis lupus familiaris (Dog).